The sequence spans 141 residues: Ribonuclease P protein component (141 aa).

The segment covering 114–134 (RRIKAKGERRGDGKRRTERPE) has biased composition (basic and acidic residues). Residues 114 to 141 (RRIKAKGERRGDGKRRTERPESGPVNGK) form a disordered region.

This sequence belongs to the RnpA family. Consists of a catalytic RNA component (M1 or rnpB) and a protein subunit.

The catalysed reaction is Endonucleolytic cleavage of RNA, removing 5'-extranucleotides from tRNA precursor.. RNaseP catalyzes the removal of the 5'-leader sequence from pre-tRNA to produce the mature 5'-terminus. It can also cleave other RNA substrates such as 4.5S RNA. The protein component plays an auxiliary but essential role in vivo by binding to the 5'-leader sequence and broadening the substrate specificity of the ribozyme. This chain is Ribonuclease P protein component, found in Brucella anthropi (strain ATCC 49188 / DSM 6882 / CCUG 24695 / JCM 21032 / LMG 3331 / NBRC 15819 / NCTC 12168 / Alc 37) (Ochrobactrum anthropi).